The chain runs to 368 residues: WD repeat-containing protein wdr-5.1 (368 aa).

The segment at 1-64 (MDPAQNQPNT…APTTSQESTI (64 aa)) is disordered. The segment covering 16 to 42 (PAVEEAQGVNNSEAEAPAPAALSSVSP) has biased composition (low complexity). WD repeat units lie at residues 77 to 116 (GHTK…CERT), 119 to 158 (GHKL…MAKT), 161 to 200 (GHTN…CVKT), 203 to 242 (AHSD…CVKT), 246 to 285 (DENP…TLKQ), 288 to 330 (GHEN…VVQS), and 333 to 368 (GHTQ…RSDS).

The chain is WD repeat-containing protein wdr-5.1 from Caenorhabditis briggsae.